A 339-amino-acid polypeptide reads, in one-letter code: MSSQPVTFQAPVAPIIPTAWPVDDVLALFNLPFNDLIFRAQTVHRENFDPTEVELATLLSIKTGGCPEDCGYCPQAARYDTGVTAQKILPLEEVLTAAREAKAHGATRFCMGAAWREPKDRDLEKVEEMVREVKAMGLETCATLGMLGEGQAEKLKNAGLDYYNHNLDTAPEFYSNVISTRDYQNRIDTLGRVRGAGIKVCCGGIVGMGESRLQRAGLIAQLCNMDPYPESVPVNNLVQVEGTPLHGTDPIDPLEFVRTVAVARITMPKARVRLSAGRREMGEAIQALCFVAGANSIFYGDKLLTTGNPEAMADQELLEKLGMHTRSTAIDARCDVTPS.

The Radical SAM core domain occupies 51 to 278 (TEVELATLLS…KARVRLSAGR (228 aa)). [4Fe-4S] cluster-binding residues include C66, C70, and C73. Residues C110, C141, C201, and R273 each coordinate [2Fe-2S] cluster.

It belongs to the radical SAM superfamily. Biotin synthase family. As to quaternary structure, homodimer. It depends on [4Fe-4S] cluster as a cofactor. The cofactor is [2Fe-2S] cluster.

The catalysed reaction is (4R,5S)-dethiobiotin + (sulfur carrier)-SH + 2 reduced [2Fe-2S]-[ferredoxin] + 2 S-adenosyl-L-methionine = (sulfur carrier)-H + biotin + 2 5'-deoxyadenosine + 2 L-methionine + 2 oxidized [2Fe-2S]-[ferredoxin]. It functions in the pathway cofactor biosynthesis; biotin biosynthesis; biotin from 7,8-diaminononanoate: step 2/2. Catalyzes the conversion of dethiobiotin (DTB) to biotin by the insertion of a sulfur atom into dethiobiotin via a radical-based mechanism. This is Biotin synthase from Janthinobacterium sp. (strain Marseille) (Minibacterium massiliensis).